The primary structure comprises 130 residues: Ribosome-binding factor A (130 aa).

The protein belongs to the RbfA family. Monomer. Binds 30S ribosomal subunits, but not 50S ribosomal subunits or 70S ribosomes.

It localises to the cytoplasm. In terms of biological role, one of several proteins that assist in the late maturation steps of the functional core of the 30S ribosomal subunit. Associates with free 30S ribosomal subunits (but not with 30S subunits that are part of 70S ribosomes or polysomes). Required for efficient processing of 16S rRNA. May interact with the 5'-terminal helix region of 16S rRNA. The polypeptide is Ribosome-binding factor A (Lachnospira eligens (strain ATCC 27750 / DSM 3376 / VPI C15-48 / C15-B4) (Eubacterium eligens)).